Here is a 350-residue protein sequence, read N- to C-terminus: Geranylgeranyl pyrophosphate synthase (350 aa).

Residues Lys-66, Arg-69, and His-98 each contribute to the isopentenyl diphosphate site. Residues Asp-105 and Asp-109 each coordinate Mg(2+). Dimethylallyl diphosphate is bound at residue Arg-114. Arg-115 contributes to the isopentenyl diphosphate binding site. Dimethylallyl diphosphate-binding residues include Lys-200, Thr-201, Gln-236, Asn-243, and Lys-263.

Belongs to the FPP/GGPP synthase family. The cofactor is Mg(2+).

It carries out the reaction isopentenyl diphosphate + dimethylallyl diphosphate = (2E)-geranyl diphosphate + diphosphate. It catalyses the reaction isopentenyl diphosphate + (2E)-geranyl diphosphate = (2E,6E)-farnesyl diphosphate + diphosphate. The enzyme catalyses isopentenyl diphosphate + (2E,6E)-farnesyl diphosphate = (2E,6E,10E)-geranylgeranyl diphosphate + diphosphate. It participates in secondary metabolite biosynthesis; terpenoid biosynthesis. Functionally, geranylgeranyl pyrophosphate synthase; part of the gene cluster that mediates the biosynthesis of pleuromutilin, a tricyclic diterpene showing antibacterial properties. The geranylgeranyl diphosphate (GGPP) synthase catalyzes the first step in pleuromutilin biosynthesis. GGPP is then substrate of the premutilin synthase (PS) to yield premutilin. Premutilin synthase is a bifunctional enzyme composed of the fusion of a class II diterpene cyclase (DTC) and a class I diterpene synthase (DTS), with the corresponding domains and active sites containing characteristic aspartate-rich motifs. GGPP is first converted to mutildienyl-diphosphate (MPP) at the class II DTC site. MPP is subsequently further cyclized at the class I DTS site, followed by a 1,5-hydride shift and addition of water prior to terminating deprotonation, to yield premutilin. In addition to the aforementioned GGPP synthase and bifunctional diterpene synthase, the cluster also contains three cytochrome P450 monooxygenases, a short-chain alcohol dehydrogenase, and an acyltransferase, involved in the conversion of premutilin to pleuromutilin. The cytochrome P450 monooxygenases P450-1 and P450-2 hydroxylate premutilin at C-11 and C-3, respectively, producing 11-hydroxypremutilin and 3-hydroxypremutilin. The combination of the actions of both ple5 and ple6 leads to the production of 3,11-dihydroxypremutilin. The short chain dehydrogenase SDR further converts 3,11-dihydroxypremutilin into mutilin. The acetyltransferase ATF then acetylates mutilin to produce 14-O-acetylmutilin. Finally, the cytochrome P450 monooxygenase P450-3 catalyzes hydroxylation on the alpha position of the acetyl side chain of 14-O-acetylmutilin to yield pleuromutilin. The protein is Geranylgeranyl pyrophosphate synthase of Clitopilus passeckerianus (Pleurotus passeckerianus).